A 416-amino-acid chain; its full sequence is Gamma-glutamyl phosphate reductase (416 aa).

This sequence belongs to the gamma-glutamyl phosphate reductase family.

The protein localises to the cytoplasm. It carries out the reaction L-glutamate 5-semialdehyde + phosphate + NADP(+) = L-glutamyl 5-phosphate + NADPH + H(+). It participates in amino-acid biosynthesis; L-proline biosynthesis; L-glutamate 5-semialdehyde from L-glutamate: step 2/2. Catalyzes the NADPH-dependent reduction of L-glutamate 5-phosphate into L-glutamate 5-semialdehyde and phosphate. The product spontaneously undergoes cyclization to form 1-pyrroline-5-carboxylate. This chain is Gamma-glutamyl phosphate reductase, found in Leptospira interrogans serogroup Icterohaemorrhagiae serovar Lai (strain 56601).